The sequence spans 685 residues: Polyphosphate kinase (685 aa).

Position 45 (Asn-45) interacts with ATP. Mg(2+) contacts are provided by Arg-375 and Arg-405. Residue His-435 is the Phosphohistidine intermediate of the active site. ATP contacts are provided by Tyr-468, Arg-564, and His-592.

Belongs to the polyphosphate kinase 1 (PPK1) family. Requires Mg(2+) as cofactor. Post-translationally, an intermediate of this reaction is the autophosphorylated ppk in which a phosphate is covalently linked to a histidine residue through a N-P bond.

It catalyses the reaction [phosphate](n) + ATP = [phosphate](n+1) + ADP. In terms of biological role, catalyzes the reversible transfer of the terminal phosphate of ATP to form a long-chain polyphosphate (polyP). In Neisseria meningitidis serogroup C (strain 053442), this protein is Polyphosphate kinase.